The primary structure comprises 871 residues: MAKIRIHEIAKELGYDSKEIIEKANELGLGIKTASNAVEPEIAAAIYEYIQTREIPEAFKKNIKTPTAKKPKKENIKEQEKLNESEKKEPKKEEKLKQEVKKEELKIEKENAKEEEKQEIIDAHKPQSLASATLAKRRGLVIVKKKKDEEEIQVKKEEVKNSNDISINNEERLSLKTMFSNADESLKKKKKEKKSFVASKKESTEKMNFLDEHDFGDISLDDEDEVVLPDFSVKEQEKPQNINKKQPNFIRQAVGNSAGFGLEGGIQRRSRKKPSKKIEKKEVEEVGSVAISKEIRVYEFADKIGKSTSEVISKLFMLGMMTTKNDFLDEDAIEILAAEFGIEINIINEADEFDYVKDYEEETDEKDLVTRAPVITIMGHVDHGKTSLLDYIRKSRVASGEAGGITQHVGAYMVEKNGRKITFIDTPGHEAFTAMRARGASITDIVIIVVAADDGVKPQTKEAINHAKAAGVPIIIAINKMDKEAANPDMVKTQLAEMEIMPVEWGGSYEFVGVSAKTGMGIEDLLEIVLLQADILELKANPKSFAKASIIESSVQKGRGAVATIIVQNGTLTIGSTVVAGEAYGKVRAMSDDQGKALKEIKPGECGVIVGLSEVADAGEILIAVKTDKEAREYANKRHEYNRQKELSKSTKVSIDELGAKIKEGNLKALPVILKADVQGSLEALKASLEKLRNDEIKVNIIHSGVGGITQSDIELASASENSIVLGFNIRPTGEVKERAKDKGVEIKTYNVIYNLLDDVKALLGGMMSPIISEEQLGQAEIRQVINVPKIGQIAGCMVTEGVINRGAKIRLIRDGVVVYEGNVSSLKRFKDDAKEVAKGYECGVGIEGCDDMRVGDYIESYKEVEEQASL.

2 disordered regions span residues 60 to 101 (KKNI…QEVK) and 184 to 203 (ESLK…KKES). Residues 61–72 (KNIKTPTAKKPK) show a composition bias toward basic residues. Positions 73 to 101 (KENIKEQEKLNESEKKEPKKEEKLKQEVK) are enriched in basic and acidic residues. The tr-type G domain occupies 370–537 (TRAPVITIMG…IVLLQADILE (168 aa)). The segment at 379–386 (GHVDHGKT) is G1. GTP is bound at residue 379–386 (GHVDHGKT). The tract at residues 404–408 (GITQH) is G2. The interval 425–428 (DTPG) is G3. Residues 425–429 (DTPGH) and 479–482 (NKMD) contribute to the GTP site. Residues 479–482 (NKMD) are G4. Positions 515–517 (SAK) are G5.

It belongs to the TRAFAC class translation factor GTPase superfamily. Classic translation factor GTPase family. IF-2 subfamily.

It is found in the cytoplasm. In terms of biological role, one of the essential components for the initiation of protein synthesis. Protects formylmethionyl-tRNA from spontaneous hydrolysis and promotes its binding to the 30S ribosomal subunits. Also involved in the hydrolysis of GTP during the formation of the 70S ribosomal complex. This chain is Translation initiation factor IF-2, found in Campylobacter jejuni (strain RM1221).